The following is a 416-amino-acid chain: Glutamyl-tRNA reductase (416 aa).

Residues 49–52, S105, 110–112, and Q116 contribute to the substrate site; these read TCNR and EPQ. C50 acts as the Nucleophile in catalysis. Position 185-190 (185-190) interacts with NADP(+); it reads GAGEMI.

It belongs to the glutamyl-tRNA reductase family. Homodimer.

It catalyses the reaction (S)-4-amino-5-oxopentanoate + tRNA(Glu) + NADP(+) = L-glutamyl-tRNA(Glu) + NADPH + H(+). The protein operates within porphyrin-containing compound metabolism; protoporphyrin-IX biosynthesis; 5-aminolevulinate from L-glutamyl-tRNA(Glu): step 1/2. In terms of biological role, catalyzes the NADPH-dependent reduction of glutamyl-tRNA(Glu) to glutamate 1-semialdehyde (GSA). The polypeptide is Glutamyl-tRNA reductase (Nitrosomonas europaea (strain ATCC 19718 / CIP 103999 / KCTC 2705 / NBRC 14298)).